The following is a 183-amino-acid chain: Translation initiation factor IF-3 (183 aa).

This sequence belongs to the IF-3 family. In terms of assembly, monomer.

Its subcellular location is the cytoplasm. Functionally, IF-3 binds to the 30S ribosomal subunit and shifts the equilibrium between 70S ribosomes and their 50S and 30S subunits in favor of the free subunits, thus enhancing the availability of 30S subunits on which protein synthesis initiation begins. The sequence is that of Translation initiation factor IF-3 from Pseudomonas entomophila (strain L48).